We begin with the raw amino-acid sequence, 219 residues long: Cytidylate kinase (219 aa).

ATP is bound at residue 21–29 (GPAASGKGT).

Belongs to the cytidylate kinase family. Type 1 subfamily.

The protein resides in the cytoplasm. The enzyme catalyses CMP + ATP = CDP + ADP. It catalyses the reaction dCMP + ATP = dCDP + ADP. This Rickettsia rickettsii (strain Iowa) protein is Cytidylate kinase.